Reading from the N-terminus, the 402-residue chain is 4-hydroxy-3-methylbut-2-enyl diphosphate reductase (402 aa).

Cys-66 provides a ligand contact to [4Fe-4S] cluster. Position 96 (His-96) interacts with (2E)-4-hydroxy-3-methylbut-2-enyl diphosphate. Position 96 (His-96) interacts with dimethylallyl diphosphate. His-96 contributes to the isopentenyl diphosphate binding site. A [4Fe-4S] cluster-binding site is contributed by Cys-157. His-185 contributes to the (2E)-4-hydroxy-3-methylbut-2-enyl diphosphate binding site. Position 185 (His-185) interacts with dimethylallyl diphosphate. His-185 contacts isopentenyl diphosphate. The Proton donor role is filled by Glu-187. Thr-250 contributes to the (2E)-4-hydroxy-3-methylbut-2-enyl diphosphate binding site. Residue Cys-288 coordinates [4Fe-4S] cluster. (2E)-4-hydroxy-3-methylbut-2-enyl diphosphate is bound by residues Ser-317, Ser-318, Asn-319, and Ser-379. 4 residues coordinate dimethylallyl diphosphate: Ser-317, Ser-318, Asn-319, and Ser-379. Residues Ser-317, Ser-318, Asn-319, and Ser-379 each coordinate isopentenyl diphosphate.

This sequence belongs to the IspH family. Requires [4Fe-4S] cluster as cofactor.

It catalyses the reaction isopentenyl diphosphate + 2 oxidized [2Fe-2S]-[ferredoxin] + H2O = (2E)-4-hydroxy-3-methylbut-2-enyl diphosphate + 2 reduced [2Fe-2S]-[ferredoxin] + 2 H(+). The enzyme catalyses dimethylallyl diphosphate + 2 oxidized [2Fe-2S]-[ferredoxin] + H2O = (2E)-4-hydroxy-3-methylbut-2-enyl diphosphate + 2 reduced [2Fe-2S]-[ferredoxin] + 2 H(+). Its pathway is isoprenoid biosynthesis; dimethylallyl diphosphate biosynthesis; dimethylallyl diphosphate from (2E)-4-hydroxy-3-methylbutenyl diphosphate: step 1/1. The protein operates within isoprenoid biosynthesis; isopentenyl diphosphate biosynthesis via DXP pathway; isopentenyl diphosphate from 1-deoxy-D-xylulose 5-phosphate: step 6/6. In terms of biological role, catalyzes the conversion of 1-hydroxy-2-methyl-2-(E)-butenyl 4-diphosphate (HMBPP) into a mixture of isopentenyl diphosphate (IPP) and dimethylallyl diphosphate (DMAPP). Acts in the terminal step of the DOXP/MEP pathway for isoprenoid precursor biosynthesis. The polypeptide is 4-hydroxy-3-methylbut-2-enyl diphosphate reductase (Gloeothece citriformis (strain PCC 7424) (Cyanothece sp. (strain PCC 7424))).